Here is a 596-residue protein sequence, read N- to C-terminus: Alpha-1,3-galactosidase A (596 aa).

An N-terminal signal peptide occupies residues 1–21; it reads MQNPVASLLFILAMLTGPCPA. Positions 23–57 are disordered; that stretch reads DYPERTERTQSAGNHVWHIDPDKGNDGNPGTAPST. 4 PbH1 repeats span residues 351–373, 482–504, 515–537, and 547–569; these read RGKI…NVHG, RKPV…LVED, VRNM…QIVP, and HRNI…RIRH.

Belongs to the glycosyl hydrolase 110 family. A subfamily.

It carries out the reaction Hydrolysis of terminal, non-reducing branched (1-&gt;3)-alpha-D-galactosidic residues, producing free D-galactose.. It catalyses the reaction Hydrolysis of terminal, non-reducing alpha-D-galactose residues in alpha-D-galactosides, including galactose oligosaccharides, galactomannans and galactolipids.. In terms of biological role, alpha-galactosidase that specifically removes branched alpha-1,3-linked galactose residues present in blood group B antigens. Has no activity toward linear alpha-1,3-linked galactose residues. The sequence is that of Alpha-1,3-galactosidase A (glaA) from Akkermansia muciniphila (strain ATCC BAA-835 / DSM 22959 / JCM 33894 / BCRC 81048 / CCUG 64013 / CIP 107961 / Muc).